A 434-amino-acid chain; its full sequence is Serine--tRNA ligase (434 aa).

An L-serine-binding site is contributed by 237 to 239 (TAE). 268–270 (RAE) lines the ATP pocket. Residue E291 participates in L-serine binding. 358 to 361 (EISS) provides a ligand contact to ATP. Position 393 (S393) interacts with L-serine.

This sequence belongs to the class-II aminoacyl-tRNA synthetase family. Type-1 seryl-tRNA synthetase subfamily. As to quaternary structure, homodimer. The tRNA molecule binds across the dimer.

The protein localises to the cytoplasm. It carries out the reaction tRNA(Ser) + L-serine + ATP = L-seryl-tRNA(Ser) + AMP + diphosphate + H(+). The enzyme catalyses tRNA(Sec) + L-serine + ATP = L-seryl-tRNA(Sec) + AMP + diphosphate + H(+). It participates in aminoacyl-tRNA biosynthesis; selenocysteinyl-tRNA(Sec) biosynthesis; L-seryl-tRNA(Sec) from L-serine and tRNA(Sec): step 1/1. Its function is as follows. Catalyzes the attachment of serine to tRNA(Ser). Is also able to aminoacylate tRNA(Sec) with serine, to form the misacylated tRNA L-seryl-tRNA(Sec), which will be further converted into selenocysteinyl-tRNA(Sec). The protein is Serine--tRNA ligase of Rhodopseudomonas palustris (strain BisB5).